Consider the following 1486-residue polypeptide: Chromosome partition protein MukB (1486 aa).

Residue 34–41 (GGNGAGKS) coordinates ATP. 3 coiled-coil regions span residues 326-418 (LEAD…QYNQ), 444-480 (LETF…QAYQ), and 509-603 (RHLA…RAPV). Residues 666-783 (PGGSEDQRLN…EVPLFGRAAR (118 aa)) form a flexible hinge region. Coiled-coil stretches lie at residues 835 to 923 (EAEI…AKLE), 977 to 1115 (EMLS…TAKA), and 1209 to 1266 (VEAI…QNVS).

This sequence belongs to the SMC family. MukB subfamily. Homodimerization via its hinge domain. Binds to DNA via its C-terminal region. Interacts, and probably forms a ternary complex, with MukE and MukF via its C-terminal region. The complex formation is stimulated by calcium or magnesium. Interacts with tubulin-related protein FtsZ.

The protein localises to the cytoplasm. The protein resides in the nucleoid. Functionally, plays a central role in chromosome condensation, segregation and cell cycle progression. Functions as a homodimer, which is essential for chromosome partition. Involved in negative DNA supercoiling in vivo, and by this means organize and compact chromosomes. May achieve or facilitate chromosome segregation by condensation DNA from both sides of a centrally located replisome during cell division. This chain is Chromosome partition protein MukB, found in Escherichia coli O1:K1 / APEC.